Here is a 774-residue protein sequence, read N- to C-terminus: RNA exonuclease 5 (774 aa).

The segment covering Met1 to Arg19 has biased composition (basic and acidic residues). The segment at Met1 to Pro22 is disordered. The 149-residue stretch at Leu228–Ala376 folds into the Exonuclease domain. RRM domains are found at residues Ser505–Thr579 and Gly600–His679.

This chain is RNA exonuclease 5, found in Homo sapiens (Human).